A 123-amino-acid polypeptide reads, in one-letter code: Zinc metalloproteinase-disintegrin-like jerdohagin (123 aa).

Residues 6–52 (RYLYIRHDREACTCHANSCIMSAYFSNSHVQYENYINDCKPQCILNE) form the Peptidase M12B domain. Histidine 12 serves as a coordination point for Zn(2+). A disulfide bond links cysteine 19 and cysteine 24. Ca(2+) is bound by residues cysteine 48 and asparagine 51. The 28-residue stretch at 53–80 (LHSWVECESGECCEQCRSECDIAESCTN) folds into the Disintegrin domain. Intrachain disulfides connect cysteine 59–cysteine 65, cysteine 64–cysteine 78, cysteine 72–cysteine 90, and cysteine 106–cysteine 116. The D/ECD-tripeptide motif lies at 71–73 (ECD).

This sequence belongs to the venom metalloproteinase (M12B) family. P-III subfamily. P-IIIa sub-subfamily. As to quaternary structure, monomer. The cofactor is Zn(2+). In terms of processing, the N-terminus is blocked. As to expression, expressed by the venom gland.

The protein localises to the secreted. Its activity is regulated as follows. Its proteolytic and hemorrhagic activities are inhibited by EDTA, but not by PMSF. Snake venom metalloproteinase that has high hemorrhagic activity and degrades the alpha-chain of fibrinogen (FGA), leaving the beta- and the gamma-chain intact. It may also inhibit platelet aggregation. Cleaves insulin B chain at '25-Phe-|-Val-26', '26-Val-|-Asn-27', '29-His-|-Leu-30', '30-Leu-|-Cys-31', '33-Ser-|-His-34', '35-Leu-|-Val-36', '40-Tyr-|-Leu-41', '41-Leu-|-Val-42', '42-Val-|-Cys-43', '43-Cys-|-Gly-44', '44-Gly-|-Glu-45', '46-Arg-|-Gly-47', '47-Gly-|-Phe-48', '49-Phe-|-Tyr-50' and '52-Pro-|-Lys-53' bonds. Also cleaves human prothrombin (72 kDa) and activation fragment F1 (27 kDa) of activated human prothrombin, to generate two new proteins of 68 and 23 kDa. This is Zinc metalloproteinase-disintegrin-like jerdohagin from Protobothrops jerdonii (Jerdon's pitviper).